The primary structure comprises 462 residues: Prenyltransferase phqI (462 aa).

A brevianamide F-binding site is contributed by E101. Residues R117, K204, Y206, K273, Y275, Y357, Y442, and Y446 each coordinate dimethylallyl diphosphate.

Belongs to the tryptophan dimethylallyltransferase family.

The protein operates within alkaloid biosynthesis. In terms of biological role, prenyltransferase; part of the gene cluster that mediates the biosynthesis of paraherquamide, a fungal indole alkaloid that belongs to a family of natural products containing a characteristic bicyclo[2.2.2]diazaoctane core. The first steps in the biosynthesis of paraherquamide is the production of the beta-methyl-proline precursor from L-isoleucine. They require oxidation of a terminally hydroxylated L-isoleucine to the corresponding aldehyde by enzymes which have still to be identified. Spontaneous cyclization and dehydration would yield the 4-methyl pyrolline-5-carboxylic acid, which is then reduced by the pyrroline-5-carboxylate reductase phqD leading to the beta-methyl-proline precursor. The next step of paraherquamide biosynthesis involves coupling of beta-methyl-proline and L-tryptophan by the bimodular NRPS phqB, to produce a monooxopiperazine intermediate. The reductase (R) domain of phqB utilizes NADPH for hydride transfer to reduce the thioester bond of the T domain-tethered linear dipeptide to a hemithioaminal intermediate, which spontaneously cleaves the C-S bond to release the aldehyde product. This compound undergoes spontaneous cyclization and dehydration to give a dienamine which is reverse prenylated at C-2 by the reverse prenyltransferase phqJ. The other prenyltransferase present in the cluster, phqI may be a redundant gene in the pathway. During biosynthetic assembly, the key step to produce the polycyclic core is catalyzed by the bifunctional reductase and intramolecular [4+2] Diels-Alderase, phqE, resulting in formation of the [2.2.2] diazaoctane intermediate preparaherquamide. Following formation of preparaherquamide, an indole 2,3-epoxidation-initiated pinacol-like rearrangement is catalyzed by the phqK FAD-dependent monooxygenase. The prenyltransferase phqA, the cytochrome P450 monooxygenase phqL, and the FAD-linked oxidoreductase phqH (or the cytochrome P450 monooxygenase phqM), are proposed to be involved in the formation of the pyran ring. The FAD-dependent monooxygenase phqK is likely responsible for generation of the spiro-oxindole, and the N-methylation is likely mediated by the phqN methyltransferase leading to the isolable natural product paraherquamide F. However, the order of these biosynthetic steps has still to be determined. In late-stage paraherquamide biosynthesis, the third P450 monooxygenase, phqO, is probably responsible for the C-14 hydroxylation, transforming paraherquamide F to paraherquamide G, and paraherquamide E to the final product paraherquamide A. The expansion from the 6-membered ring pyran (in paraherquamides F and G) to the 7-membered dioxepin ring (in paraherquamides A and E) represents a poorly understood but intriguing process that probably involves the 2-oxoglutarate-dependent dioxygenase phqC. Finally, the remaining members of the paraherquamide cluster, including phqI as well as phqM (or phqH), do not have a clearly prescribed role and appear to be redundant. The chain is Prenyltransferase phqI from Penicillium fellutanum.